A 90-amino-acid polypeptide reads, in one-letter code: Phosphoribosyl-ATP pyrophosphatase (90 aa).

It belongs to the PRA-PH family.

Its subcellular location is the cytoplasm. It carries out the reaction 1-(5-phospho-beta-D-ribosyl)-ATP + H2O = 1-(5-phospho-beta-D-ribosyl)-5'-AMP + diphosphate + H(+). The protein operates within amino-acid biosynthesis; L-histidine biosynthesis; L-histidine from 5-phospho-alpha-D-ribose 1-diphosphate: step 2/9. This chain is Phosphoribosyl-ATP pyrophosphatase, found in Streptomyces griseus subsp. griseus (strain JCM 4626 / CBS 651.72 / NBRC 13350 / KCC S-0626 / ISP 5235).